Reading from the N-terminus, the 144-residue chain is Peptide methionine sulfoxide reductase MsrB (144 aa).

The segment covering 1-12 has biased composition (basic and acidic residues); it reads MDKQQGELRQRL. The segment at 1-25 is disordered; it reads MDKQQGELRQRLTPEQYAVTQEAAT. The MsrB domain maps to 5–128; it reads QGELRQRLTP…NSAALKFIPV (124 aa). The active-site Nucleophile is the Cys-117.

This sequence belongs to the MsrB Met sulfoxide reductase family.

It carries out the reaction L-methionyl-[protein] + [thioredoxin]-disulfide + H2O = L-methionyl-(R)-S-oxide-[protein] + [thioredoxin]-dithiol. This is Peptide methionine sulfoxide reductase MsrB from Lactiplantibacillus plantarum (strain ATCC BAA-793 / NCIMB 8826 / WCFS1) (Lactobacillus plantarum).